Reading from the N-terminus, the 497-residue chain is Acetyl-coenzyme A carboxylase carboxyl transferase subunit beta, chloroplastic (497 aa).

The CoA carboxyltransferase N-terminal domain occupies 230 to 497 (LWVQCENCYG…FFPVNSNSIK (268 aa)). 4 residues coordinate Zn(2+): C234, C237, C253, and C256. The C4-type zinc finger occupies 234-256 (CENCYGLNYKKFFRSKFNICEQC).

It belongs to the AccD/PCCB family. Acetyl-CoA carboxylase is a heterohexamer composed of biotin carboxyl carrier protein, biotin carboxylase and 2 subunits each of ACCase subunit alpha and ACCase plastid-coded subunit beta (accD). Zn(2+) is required as a cofactor.

It localises to the plastid. It is found in the chloroplast stroma. It catalyses the reaction N(6)-carboxybiotinyl-L-lysyl-[protein] + acetyl-CoA = N(6)-biotinyl-L-lysyl-[protein] + malonyl-CoA. The protein operates within lipid metabolism; malonyl-CoA biosynthesis; malonyl-CoA from acetyl-CoA: step 1/1. Component of the acetyl coenzyme A carboxylase (ACC) complex. Biotin carboxylase (BC) catalyzes the carboxylation of biotin on its carrier protein (BCCP) and then the CO(2) group is transferred by the transcarboxylase to acetyl-CoA to form malonyl-CoA. The polypeptide is Acetyl-coenzyme A carboxylase carboxyl transferase subunit beta, chloroplastic (Nandina domestica (Heavenly bamboo)).